The chain runs to 276 residues: Ribonuclease T2 (276 aa).

The signal sequence occupies residues 1–17 (MGMLALGAMQLAAGAVF). Cystine bridges form between Cys-22–Cys-41, Cys-30–Cys-77, Cys-40–Cys-143, Cys-85–Cys-135, and Cys-208–Cys-242. Asn-32 carries an N-linked (GlcNAc...) asparagine glycan. Residue His-70 is part of the active site. Asn-93 carries N-linked (GlcNAc...) asparagine glycosylation. Catalysis depends on residues Glu-128 and His-132. The N-linked (GlcNAc...) asparagine glycan is linked to Asn-256.

This sequence belongs to the RNase T2 family.

The catalysed reaction is a ribonucleotidyl-ribonucleotide-RNA + H2O = a 3'-end 3'-phospho-ribonucleotide-RNA + a 5'-end dephospho-ribonucleoside-RNA + H(+). The protein is Ribonuclease T2 (rntB) of Aspergillus oryzae (strain ATCC 42149 / RIB 40) (Yellow koji mold).